Reading from the N-terminus, the 362-residue chain is NAD(P)H-quinone oxidoreductase subunit 1, chloroplastic (362 aa).

8 helical membrane-spanning segments follow: residues 27 to 47 (IWIL…LVIV), 94 to 114 (IPLF…SFLV), 128 to 148 (IGVF…LMAG), 164 to 184 (AAQS…ISLL), 202 to 222 (FFGW…ISSL), 247 to 267 (YSGI…LVSS), 303 to 323 (TMSI…SITI), and 335 to 355 (LLNL…LLTT).

Belongs to the complex I subunit 1 family. In terms of assembly, NDH is composed of at least 16 different subunits, 5 of which are encoded in the nucleus.

The protein localises to the plastid. Its subcellular location is the chloroplast thylakoid membrane. It catalyses the reaction a plastoquinone + NADH + (n+1) H(+)(in) = a plastoquinol + NAD(+) + n H(+)(out). The catalysed reaction is a plastoquinone + NADPH + (n+1) H(+)(in) = a plastoquinol + NADP(+) + n H(+)(out). Its function is as follows. NDH shuttles electrons from NAD(P)H:plastoquinone, via FMN and iron-sulfur (Fe-S) centers, to quinones in the photosynthetic chain and possibly in a chloroplast respiratory chain. The immediate electron acceptor for the enzyme in this species is believed to be plastoquinone. Couples the redox reaction to proton translocation, and thus conserves the redox energy in a proton gradient. This Oryza sativa (Rice) protein is NAD(P)H-quinone oxidoreductase subunit 1, chloroplastic (ndhA).